The sequence spans 512 residues: Respiratory nitrate reductase 1 beta chain (512 aa).

3 consecutive 4Fe-4S ferredoxin-type domains span residues 7–35 (VGMVLNLDKCIGCHTCSVTCKNVWTSREG), 175–206 (TFMMYLPRLCEHCLNPACVATCPSGAIYKREE), and 208–237 (GIVLIDQDKCRGWRMCITGCPYKKIYFNWK). The [4Fe-4S] cluster site is built by Cys-16, Cys-19, Cys-22, Cys-26, Cys-184, Cys-187, and Cys-192. Residues Cys-196, Cys-217, and Cys-223 each contribute to the [3Fe-4S] cluster site. The [4Fe-4S] cluster site is built by Cys-227, Cys-244, Cys-247, Cys-259, and Cys-263.

In terms of assembly, dimer of heterotrimers each composed of an alpha, a beta and a gamma chain. Alpha and beta are catalytic chains; gamma chains are involved in binding the enzyme complex to the cytoplasmic membrane. It depends on [4Fe-4S] cluster as a cofactor. [3Fe-4S] cluster serves as cofactor.

Its subcellular location is the cell membrane. The catalysed reaction is nitrate + a quinol = a quinone + nitrite + H2O. Functionally, the nitrate reductase enzyme complex allows E.coli to use nitrate as an electron acceptor during anaerobic growth. The beta chain is an electron transfer unit containing four cysteine clusters involved in the formation of iron-sulfur centers. Electrons are transferred from the gamma chain to the molybdenum cofactor of the alpha subunit. The protein is Respiratory nitrate reductase 1 beta chain (narH) of Escherichia coli (strain K12).